The sequence spans 41 residues: MKIRNSLKSLRGRHRDNQLVRRKGRVYVINKTQKRYKARQG.

The interval 1–21 is disordered; it reads MKIRNSLKSLRGRHRDNQLVR.

It belongs to the bacterial ribosomal protein bL36 family.

The chain is Large ribosomal subunit protein bL36 from Methylobacterium sp. (strain 4-46).